A 179-amino-acid chain; its full sequence is Large ribosomal subunit protein uL5 (179 aa).

It belongs to the universal ribosomal protein uL5 family. Part of the 50S ribosomal subunit; part of the 5S rRNA/L5/L18/L25 subcomplex. Contacts the 5S rRNA and the P site tRNA. Forms a bridge to the 30S subunit in the 70S ribosome.

Functionally, this is one of the proteins that bind and probably mediate the attachment of the 5S RNA into the large ribosomal subunit, where it forms part of the central protuberance. In the 70S ribosome it contacts protein S13 of the 30S subunit (bridge B1b), connecting the 2 subunits; this bridge is implicated in subunit movement. Contacts the P site tRNA; the 5S rRNA and some of its associated proteins might help stabilize positioning of ribosome-bound tRNAs. This chain is Large ribosomal subunit protein uL5, found in Desulfovibrio desulfuricans (strain ATCC 27774 / DSM 6949 / MB).